The primary structure comprises 315 residues: tRNA pseudouridine synthase B (315 aa).

Asp54 acts as the Nucleophile in catalysis.

The protein belongs to the pseudouridine synthase TruB family. Type 1 subfamily.

It catalyses the reaction uridine(55) in tRNA = pseudouridine(55) in tRNA. In terms of biological role, responsible for synthesis of pseudouridine from uracil-55 in the psi GC loop of transfer RNAs. The polypeptide is tRNA pseudouridine synthase B (Agrobacterium fabrum (strain C58 / ATCC 33970) (Agrobacterium tumefaciens (strain C58))).